Consider the following 116-residue polypeptide: Large ribosomal subunit protein bL19 (116 aa).

This sequence belongs to the bacterial ribosomal protein bL19 family.

Functionally, this protein is located at the 30S-50S ribosomal subunit interface and may play a role in the structure and function of the aminoacyl-tRNA binding site. In Staphylococcus aureus (strain Mu3 / ATCC 700698), this protein is Large ribosomal subunit protein bL19.